Reading from the N-terminus, the 283-residue chain is Pantothenate synthetase (283 aa).

30–37 (MGNLHAGH) provides a ligand contact to ATP. The active-site Proton donor is H37. Q61 is a (R)-pantoate binding site. Q61 lines the beta-alanine pocket. 149-152 (GQKD) lines the ATP pocket. Q155 provides a ligand contact to (R)-pantoate. Residues V178 and 186–189 (LSSR) contribute to the ATP site.

Belongs to the pantothenate synthetase family. Homodimer.

The protein resides in the cytoplasm. The catalysed reaction is (R)-pantoate + beta-alanine + ATP = (R)-pantothenate + AMP + diphosphate + H(+). It participates in cofactor biosynthesis; (R)-pantothenate biosynthesis; (R)-pantothenate from (R)-pantoate and beta-alanine: step 1/1. In terms of biological role, catalyzes the condensation of pantoate with beta-alanine in an ATP-dependent reaction via a pantoyl-adenylate intermediate. This chain is Pantothenate synthetase, found in Hydrogenovibrio crunogenus (strain DSM 25203 / XCL-2) (Thiomicrospira crunogena).